The sequence spans 960 residues: Phosphoenolpyruvate carboxylase 1 (960 aa).

Ser-7 bears the Phosphoserine mark. Catalysis depends on residues His-168 and Lys-596.

The protein belongs to the PEPCase type 1 family. In terms of assembly, homotetramer. The cofactor is Mg(2+).

The protein resides in the cytoplasm. It catalyses the reaction oxaloacetate + phosphate = phosphoenolpyruvate + hydrogencarbonate. It functions in the pathway photosynthesis; C3 acid pathway. Its activity is regulated as follows. By light-reversible phosphorylation. Functionally, through the carboxylation of phosphoenolpyruvate (PEP) it forms oxaloacetate, a four-carbon dicarboxylic acid source for the tricarboxylic acid cycle. The chain is Phosphoenolpyruvate carboxylase 1 (PEPC) from Sorghum bicolor (Sorghum).